The chain runs to 158 residues: Transcription elongation factor GreA (158 aa).

This sequence belongs to the GreA/GreB family.

In terms of biological role, necessary for efficient RNA polymerase transcription elongation past template-encoded arresting sites. The arresting sites in DNA have the property of trapping a certain fraction of elongating RNA polymerases that pass through, resulting in locked ternary complexes. Cleavage of the nascent transcript by cleavage factors such as GreA or GreB allows the resumption of elongation from the new 3'terminus. GreA releases sequences of 2 to 3 nucleotides. This is Transcription elongation factor GreA from Allorhizobium ampelinum (strain ATCC BAA-846 / DSM 112012 / S4) (Agrobacterium vitis (strain S4)).